The primary structure comprises 171 residues: ATP synthase subunit b (171 aa).

A helical membrane pass occupies residues phenylalanine 2–leucine 22.

This sequence belongs to the ATPase B chain family. As to quaternary structure, F-type ATPases have 2 components, F(1) - the catalytic core - and F(0) - the membrane proton channel. F(1) has five subunits: alpha(3), beta(3), gamma(1), delta(1), epsilon(1). F(0) has three main subunits: a(1), b(2) and c(10-14). The alpha and beta chains form an alternating ring which encloses part of the gamma chain. F(1) is attached to F(0) by a central stalk formed by the gamma and epsilon chains, while a peripheral stalk is formed by the delta and b chains.

It localises to the cell inner membrane. In terms of biological role, f(1)F(0) ATP synthase produces ATP from ADP in the presence of a proton or sodium gradient. F-type ATPases consist of two structural domains, F(1) containing the extramembraneous catalytic core and F(0) containing the membrane proton channel, linked together by a central stalk and a peripheral stalk. During catalysis, ATP synthesis in the catalytic domain of F(1) is coupled via a rotary mechanism of the central stalk subunits to proton translocation. Its function is as follows. Component of the F(0) channel, it forms part of the peripheral stalk, linking F(1) to F(0). This chain is ATP synthase subunit b, found in Helicobacter pylori (strain G27).